The primary structure comprises 102 residues: PE family immunomodulator PE15 (102 aa).

Positions 3–91 (LRVVPESLAG…SGASYAARDA (89 aa)) constitute a PE domain.

This sequence belongs to the mycobacterial PE family.

The protein localises to the secreted. Its subcellular location is the cell envelope. It is found in the cell surface. May play a pivotal role in the evasion of host immune response by M.tuberculosis. Mediates production of IL-10 via activation of the p38 and ERK1/2 mitogen-activated protein kinase (MAPK) signaling pathways. This Mycobacterium tuberculosis (strain CDC 1551 / Oshkosh) protein is PE family immunomodulator PE15 (PE15).